The sequence spans 143 residues: Snake venom vascular endothelial growth factor toxin (143 aa).

Residues 1–24 (MAAYLLAVAILFCIQGWPSATVQG) form the signal peptide. Gln-25 carries the post-translational modification Pyrrolidone carboxylic acid. 3 cysteine pairs are disulfide-bonded: Cys-38-Cys-80, Cys-69-Cys-115, and Cys-73-Cys-117. The disordered stretch occupies residues 115 to 143 (CECRPRSPGDVNNGRNPEEGEPRARFPFV). Basic and acidic residues predominate over residues 130–143 (NPEEGEPRARFPFV).

Belongs to the PDGF/VEGF growth factor family. Snake venom VEGF subfamily. As to quaternary structure, homodimer; disulfide-linked. Interacts with VEGF receptor-2 (KDR). In terms of processing, the N-terminus is blocked for N-terminal sequencing, suggesting a Pyrrolidone carboxylic acid at Gln-25. Expressed by the venom gland.

It localises to the secreted. In terms of biological role, snake venom VEGFs that may contribute to venom dispersion and prey subjugation by inducing vascular permeability and hypotension. This protein induces an increase in capillary permeability when intradermally injected into mice. Also provokes a drastic hypotensive effect after intravenous injection. The hypotension is mediated by nitric oxide (NO), which is produced by VEGF-activated endothelium NO synthase. Also induces angiogenesis in vitro. Unlike other crotalid VEGFs, this protein interacts with VEGF receptor-2 (KDR) with a high affinity (Kd=413 pM), whereas no interaction is detected with VEGF receptor-1 (FLT1). The polypeptide is Snake venom vascular endothelial growth factor toxin (Protobothrops jerdonii (Jerdon's pitviper)).